Reading from the N-terminus, the 273-residue chain is Large ribosomal subunit protein uL2cz/uL2cy (273 aa).

A disordered region spans residues 224-273 (NPVDHPHGGGEGRAPIGRKKPATPWGYPALGRRSRKRNKYSDRFILRRRK). Basic and acidic residues predominate over residues 262–273 (KYSDRFILRRRK).

Belongs to the universal ribosomal protein uL2 family. As to quaternary structure, part of the 50S ribosomal subunit.

The protein localises to the plastid. Its subcellular location is the chloroplast. The chain is Large ribosomal subunit protein uL2cz/uL2cy (rpl2-A) from Piper cenocladum (Ant piper).